Here is a 561-residue protein sequence, read N- to C-terminus: Glutamine--tRNA ligase (561 aa).

The short motif at 34–44 (PEPNGYLHIGH) is the 'HIGH' region element. ATP-binding positions include 35–37 (EPN) and 41–47 (HIGHAKS). L-glutamine is bound by residues aspartate 67 and tyrosine 212. ATP-binding positions include threonine 231, 261–262 (RL), and 269–271 (MSK). The 'KMSKS' region motif lies at 268-272 (VMSKR).

It belongs to the class-I aminoacyl-tRNA synthetase family. In terms of assembly, monomer.

The protein resides in the cytoplasm. The catalysed reaction is tRNA(Gln) + L-glutamine + ATP = L-glutaminyl-tRNA(Gln) + AMP + diphosphate. This Idiomarina loihiensis (strain ATCC BAA-735 / DSM 15497 / L2-TR) protein is Glutamine--tRNA ligase.